Reading from the N-terminus, the 306-residue chain is Pyridoxal 5'-phosphate synthase subunit PdxS (306 aa).

D36 serves as a coordination point for D-ribose 5-phosphate. The Schiff-base intermediate with D-ribose 5-phosphate role is filled by K93. G165 provides a ligand contact to D-ribose 5-phosphate. R177 contributes to the D-glyceraldehyde 3-phosphate binding site. Residues G226 and 247–248 (GS) contribute to the D-ribose 5-phosphate site.

Belongs to the PdxS/SNZ family. As to quaternary structure, in the presence of PdxT, forms a dodecamer of heterodimers.

It carries out the reaction aldehydo-D-ribose 5-phosphate + D-glyceraldehyde 3-phosphate + L-glutamine = pyridoxal 5'-phosphate + L-glutamate + phosphate + 3 H2O + H(+). Its pathway is cofactor biosynthesis; pyridoxal 5'-phosphate biosynthesis. In terms of biological role, catalyzes the formation of pyridoxal 5'-phosphate from ribose 5-phosphate (RBP), glyceraldehyde 3-phosphate (G3P) and ammonia. The ammonia is provided by the PdxT subunit. Can also use ribulose 5-phosphate and dihydroxyacetone phosphate as substrates, resulting from enzyme-catalyzed isomerization of RBP and G3P, respectively. This is Pyridoxal 5'-phosphate synthase subunit PdxS from Corynebacterium urealyticum (strain ATCC 43042 / DSM 7109).